A 500-amino-acid polypeptide reads, in one-letter code: Galactofuranose transporter ATP-binding protein YtfR (500 aa).

ABC transporter domains follow at residues 10–245 (LRTE…LGRE) and 259–497 (LSDK…IMNA). 42–49 (GENGAGKS) lines the ATP pocket.

This sequence belongs to the ABC transporter superfamily. In terms of assembly, the complex is composed of two ATP-binding proteins (YtfR), two transmembrane proteins (YtfT and YjfF) and a solute-binding protein (YtfQ).

It localises to the cell inner membrane. The catalysed reaction is D-galactofuranose(out) + ATP + H2O = D-galactofuranose(in) + ADP + phosphate + H(+). Part of the ABC transporter complex YtfQRT-YjfF involved in galactofuranose transport. Responsible for energy coupling to the transport system. The sequence is that of Galactofuranose transporter ATP-binding protein YtfR (ytfR) from Escherichia coli O157:H7.